Here is a 412-residue protein sequence, read N- to C-terminus: MNLKQELIERFTRYVKIDTQSNEESHTVPTTPGQIEFGKLLVEELKEIGLTEVTMDDNGYVMATLPANTDKDVPVIGFLAHLDTATDFTGKNVKPQIHENFDGNAITLNEELNVVLTPEQFPELPSYKGHTIITTDGTTLLGADDKAGLTEIMVAMNHLIHNPQIKHGKIRVAFTPDEEIGRGPAHFDVEAFGASFAYTMDGGPLGGLEYESFNAAGAKLTFNGTNTHPGTAKNKMRNATKLAMEFNGYLPVEDAPEYTEGYEGFYHLLSLNGDVEQSKAYYIIRDFDRENFEARKNNVKNIVKTMQEKYGEDAVVLEMNDQYYNMLEKIEPVREIVDIAYEAMKSLDIEPNIHPIRGGTDGSQLSYMGLPTPNIFTGGENYHGKFEYVSVDTMEKAVQVIVEIARRFEEQA.

Residue histidine 81 participates in Zn(2+) binding. Aspartate 83 is an active-site residue. Aspartate 144 lines the Zn(2+) pocket. Residue glutamate 178 is the Proton acceptor of the active site. Residues glutamate 179, aspartate 201, and histidine 383 each coordinate Zn(2+).

The protein belongs to the peptidase M20B family. Requires Zn(2+) as cofactor.

The protein localises to the cytoplasm. It catalyses the reaction Release of the N-terminal residue from a tripeptide.. Cleaves the N-terminal amino acid of tripeptides. In Bacillus cereus (strain ATCC 14579 / DSM 31 / CCUG 7414 / JCM 2152 / NBRC 15305 / NCIMB 9373 / NCTC 2599 / NRRL B-3711), this protein is Peptidase T.